Reading from the N-terminus, the 266-residue chain is Type III pantothenate kinase (266 aa).

ATP is bound at residue 11 to 18 (DIGNTSTV). Residue 111–114 (GADR) coordinates substrate. Aspartate 113 serves as the catalytic Proton acceptor. Aspartate 135 contributes to the K(+) binding site. An ATP-binding site is contributed by threonine 138. Residue threonine 190 participates in substrate binding.

This sequence belongs to the type III pantothenate kinase family. Homodimer. NH4(+) serves as cofactor. Requires K(+) as cofactor.

It is found in the cytoplasm. The enzyme catalyses (R)-pantothenate + ATP = (R)-4'-phosphopantothenate + ADP + H(+). It participates in cofactor biosynthesis; coenzyme A biosynthesis; CoA from (R)-pantothenate: step 1/5. Its function is as follows. Catalyzes the phosphorylation of pantothenate (Pan), the first step in CoA biosynthesis. The protein is Type III pantothenate kinase of Deinococcus geothermalis (strain DSM 11300 / CIP 105573 / AG-3a).